A 156-amino-acid chain; its full sequence is Homeobox-leucine zipper protein ATHB-52 (156 aa).

The homeobox DNA-binding region spans 8–67 (GKNKKKRLTQDQVRQLEKCFTMNKKLEPDLKLQLSNQLGLPQRQVAVWFQNKRARFKTQS). Positions 68–96 (LEVQHCTLQSKHEAALSDKAKLEHQVQFL) are leucine-zipper.

The protein belongs to the HD-ZIP homeobox family. Class I subfamily. As to expression, expressed in roots and flowers.

Its subcellular location is the nucleus. Its function is as follows. Probable transcription factor. This is Homeobox-leucine zipper protein ATHB-52 (ATHB-52) from Arabidopsis thaliana (Mouse-ear cress).